The following is a 424-amino-acid chain: MGLSYGLFICFLLWAGTGLCYPPTTTEDKTHPSLPSSPSVVVECRHAWLVVNVSKNLFGTGRLVRPADLTLGPENCEPLISGDSDDTVRFEVELHKCGNSVQVTEDALVYSTFLLHNPRPMGNLSILRTNRAEVPIECRYPRHSNVSSEAILPTWVPFRTTMLSEEKLAFSLRLMEEDWGSEKQSPTFQLGDLAHLQAEVHTGRHIPLRLFVDYCVATLTPDQNASPHHTIVDFHGCLVDGLSDASSAFKAPRPRPETLQFTVDTFHFANDPRNMIYITCHLKVTPASRVPDQLNKACSFIKSSNRWFPVEGPADICNCCNKGSCGLQGRSWRLSHLDRPWHKMASRNRRHVTEEADITVGPLIFLGKAADRGVEGSTSPHTSVMVGIGLATVLSLTLATIVLGLARRHHTASRPMICPVSASQ.

Residues 1–22 (MGLSYGLFICFLLWAGTGLCYP) form the signal peptide. At 23 to 383 (PTTTEDKTHP…VEGSTSPHTS (361 aa)) the chain is on the extracellular side. One can recognise a ZP domain in the interval 43–305 (ECRHAWLVVN…KACSFIKSSN (263 aa)). Intrachain disulfides connect Cys44/Cys138 and Cys76/Cys97. An N-linked (GlcNAc...) asparagine glycan is attached at Asn52. N-linked (GlcNAc...) asparagine glycosylation is found at Asn123 and Asn145. 3 O-linked (GalNAc...) threonine glycosylation sites follow: Thr154, Thr160, and Thr161. Disulfide bonds link Cys215–Cys280 and Cys237–Cys298. The propeptide at 349–424 (RRHVTEEADI…PMICPVSASQ (76 aa)) is removed in mature form. The helical transmembrane segment at 384–404 (VMVGIGLATVLSLTLATIVLG) threads the bilayer. Over 405–424 (LARRHHTASRPMICPVSASQ) the chain is Cytoplasmic.

This sequence belongs to the ZP domain family. ZPC subfamily. Polymers of ZP2 and ZP3 organized into long filaments cross-linked by ZP1 homodimers. Interacts with ZP1 and ZP2. Post-translationally, proteolytically cleaved before the transmembrane segment to yield the secreted ectodomain incorporated in the zona pellucida. In terms of processing, N-glycosylated. O-glycosylated; removal of O-linked glycans may play an important role in the post-fertilization block to polyspermy. In terms of tissue distribution, expressed in oocytes.

Its subcellular location is the zona pellucida. The protein localises to the cell membrane. Component of the zona pellucida, an extracellular matrix surrounding oocytes which mediates sperm binding, induction of the acrosome reaction and prevents post-fertilization polyspermy. The zona pellucida is composed of 3 to 4 glycoproteins, ZP1, ZP2, ZP3, and ZP4. ZP3 is essential for sperm binding and zona matrix formation. The polypeptide is Zona pellucida sperm-binding protein 3 (ZP3) (Felis catus (Cat)).